The primary structure comprises 276 residues: Small ribosomal subunit protein uS2 (276 aa).

This sequence belongs to the universal ribosomal protein uS2 family.

In Chlamydia abortus (strain DSM 27085 / S26/3) (Chlamydophila abortus), this protein is Small ribosomal subunit protein uS2.